The primary structure comprises 213 residues: Probable GTP-binding protein EngB (213 aa).

One can recognise an EngB-type G domain in the interval 30 to 204; it reads SVQSIAFMGR…REFILETLGI (175 aa). GTP-binding positions include 38–45, 65–69, 83–86, 150–153, and 183–185; these read GRSNSGKS, GKTKL, DLPG, TKID, and ISA. 2 residues coordinate Mg(2+): S45 and T67.

The protein belongs to the TRAFAC class TrmE-Era-EngA-EngB-Septin-like GTPase superfamily. EngB GTPase family. It depends on Mg(2+) as a cofactor.

Functionally, necessary for normal cell division and for the maintenance of normal septation. The sequence is that of Probable GTP-binding protein EngB from Leptospira biflexa serovar Patoc (strain Patoc 1 / Ames).